Reading from the N-terminus, the 214-residue chain is Ribonuclease HII (214 aa).

One can recognise an RNase H type-2 domain in the interval 26 to 214 (EIVCGVDEAG…PVRAALDLIR (189 aa)). 3 residues coordinate a divalent metal cation: aspartate 32, glutamate 33, and aspartate 124.

The protein belongs to the RNase HII family. It depends on Mn(2+) as a cofactor. The cofactor is Mg(2+).

It localises to the cytoplasm. It carries out the reaction Endonucleolytic cleavage to 5'-phosphomonoester.. Endonuclease that specifically degrades the RNA of RNA-DNA hybrids. This chain is Ribonuclease HII, found in Burkholderia cenocepacia (strain HI2424).